Reading from the N-terminus, the 458-residue chain is Argininosuccinate lyase (458 aa).

Belongs to the lyase 1 family. Argininosuccinate lyase subfamily.

It localises to the cytoplasm. The enzyme catalyses 2-(N(omega)-L-arginino)succinate = fumarate + L-arginine. It functions in the pathway amino-acid biosynthesis; L-arginine biosynthesis; L-arginine from L-ornithine and carbamoyl phosphate: step 3/3. This is Argininosuccinate lyase from Actinobacillus pleuropneumoniae serotype 3 (strain JL03).